We begin with the raw amino-acid sequence, 683 residues long: Amino acid transporter heavy chain SLC3A1 (683 aa).

The span at 1-10 shows a compositional bias: basic and acidic residues; the sequence is MNEDKDKRDS. Residues 1–50 form a disordered region; it reads MNEDKDKRDSIQMSMKGCRTNNGFVQNEDIQEQDPDSRDTPQSNAVSIPA. Residues 1–86 lie on the Cytoplasmic side of the membrane; the sequence is MNEDKDKRDS…ARYRVPREIL (86 aa). Ser10 carries the phosphoserine modification. A helical; Signal-anchor for type II membrane protein transmembrane segment spans residues 87–107; sequence FWLTVVSVFLLIGATIAIIII. At 108–683 the chain is on the extracellular side; it reads SPKCLDWWQA…SVLDLLYSSC (576 aa). Asn211 lines the Ca(2+) pocket. N-linked (GlcNAc...) asparagine glycosylation is found at Asn211, Asn238, and Asn258. Cys239 and Cys270 form a disulfide bridge. Asp281, Phe315, Leu316, and Glu318 together coordinate Ca(2+). A glycan (N-linked (GlcNAc...) asparagine) is linked at Asn329. Residue Ser383 is modified to Phosphoserine. 3 N-linked (GlcNAc...) asparagine glycosylation sites follow: Asn510, Asn520, and Asn574. Intrachain disulfides connect Cys568-Cys664 and Cys671-Cys683.

In terms of assembly, disulfide-linked heterodimer composed of the catalytic light subunit SLC7A9 and the heavy subunit SLC3A1. The heterodimer is the minimal functional unit. Assembles in non-covalently linked heterotetramers (dimers of heterodimers) and higher order oligomers; the oligomerization is mediated by SLC3A1 likely to prevent degradation in the endoplasmic reticulum and facilitate heteromer trafficking to the plasma membrane. Disulfide-linked heterodimer composed of the catalytic light subunit SLC7A13 and the heavy subunit SLC3A1. Predominantly expressed in kidney and intestine. In kidney localized to the apical membrane of the proximal tubules.

The protein resides in the cell membrane. The protein localises to the apical cell membrane. In terms of biological role, acts as a chaperone that facilitates biogenesis and trafficking of functional transporter heteromers to the plasma membrane. Associates with SLC7A9 to form a functional transporter complex that mediates the electrogenic exchange between cationic amino acids and neutral amino acids, with a stoichiometry of 1:1. SLC7A9-SLC3A1 transporter has system b(0,+)-like activity with high affinity for extracellular cationic amino acids and L-cystine and lower affinity for intracellular neutral amino acids. Substrate exchange is driven by high concentration of intracellular neutral amino acids and the intracellular reduction of L-cystine to L-cysteine. SLC7A9-SLC3A1 acts as a major transporter for reabsorption of L-cystine and dibasic amino acids across the brush border membrane in early proximal tubules. Associates with SLC7A13 to form a functional complex that transports anionic and neutral amino acids via exchange or facilitated diffusion. SLC7A13-SLC3A1 may act as a major transporter for L-cystine in late proximal tubules, ensuring its reabsorption from the luminal fluid in exchange for cytosolic L-glutamate or L-aspartate. The protein is Amino acid transporter heavy chain SLC3A1 (Slc3a1) of Rattus norvegicus (Rat).